We begin with the raw amino-acid sequence, 261 residues long: Insulin-like growth factor-binding protein-related protein 1 (261 aa).

The N-terminal stretch at 1-17 (MWIPLLLVALVVPAIRC) is a signal peptide. Positions 18–101 (ERKCGECNPE…DPPEAMCVCL (84 aa)) constitute an IGFBP N-terminal domain. Cystine bridges form between Cys-21/Cys-45, Cys-24/Cys-47, Cys-29/Cys-48, Cys-36/Cys-51, Cys-59/Cys-82, Cys-76/Cys-98, Cys-100/Cys-118, and Cys-107/Cys-139. Residues 70 to 141 (NRGHGPCGEY…RAMHRGPCKS (72 aa)) enclose the Kazal-like domain. In terms of domain architecture, Ig-like C2-type spans 143-243 (PKITSPPEEA…GESSAAARVV (101 aa)). Asn-154 carries an N-linked (GlcNAc...) asparagine glycan. Cys-164 and Cys-227 form a disulfide bridge.

In terms of tissue distribution, expressed by the venom gland.

Its subcellular location is the secreted. This is Insulin-like growth factor-binding protein-related protein 1 from Cupiennius salei (American wandering spider).